A 554-amino-acid polypeptide reads, in one-letter code: CTP synthase (554 aa).

The amidoligase domain stretch occupies residues 1-265; sequence MTPLIFVTGG…DEIVIDQFKL (265 aa). Ser-13 provides a ligand contact to CTP. Ser-13 contacts UTP. ATP-binding positions include 14–19 and Asp-71; that span reads SLGKGI. 2 residues coordinate Mg(2+): Asp-71 and Glu-139. CTP is bound by residues 146–148, 186–191, and Lys-222; these read DIE and KTKPTQ. UTP is bound by residues 186–191 and Lys-222; that span reads KTKPTQ. The 254-residue stretch at 292–545 folds into the Glutamine amidotransferase type-1 domain; it reads TIAVVGKYVD…VKASRARKAG (254 aa). Gly-353 contacts L-glutamine. Cys-380 serves as the catalytic Nucleophile; for glutamine hydrolysis. Residues 381-384, Glu-404, and Arg-471 contribute to the L-glutamine site; that span reads YGMQ. Catalysis depends on residues His-518 and Glu-520.

The protein belongs to the CTP synthase family. Homotetramer.

The enzyme catalyses UTP + L-glutamine + ATP + H2O = CTP + L-glutamate + ADP + phosphate + 2 H(+). It carries out the reaction L-glutamine + H2O = L-glutamate + NH4(+). It catalyses the reaction UTP + NH4(+) + ATP = CTP + ADP + phosphate + 2 H(+). The protein operates within pyrimidine metabolism; CTP biosynthesis via de novo pathway; CTP from UDP: step 2/2. Allosterically activated by GTP, when glutamine is the substrate; GTP has no effect on the reaction when ammonia is the substrate. The allosteric effector GTP functions by stabilizing the protein conformation that binds the tetrahedral intermediate(s) formed during glutamine hydrolysis. Inhibited by the product CTP, via allosteric rather than competitive inhibition. Its function is as follows. Catalyzes the ATP-dependent amination of UTP to CTP with either L-glutamine or ammonia as the source of nitrogen. Regulates intracellular CTP levels through interactions with the four ribonucleotide triphosphates. The polypeptide is CTP synthase (Xylella fastidiosa (strain M23)).